Here is a 212-residue protein sequence, read N- to C-terminus: ATP phosphoribosyltransferase (212 aa).

It belongs to the ATP phosphoribosyltransferase family. Short subfamily. Heteromultimer composed of HisG and HisZ subunits.

The protein localises to the cytoplasm. It catalyses the reaction 1-(5-phospho-beta-D-ribosyl)-ATP + diphosphate = 5-phospho-alpha-D-ribose 1-diphosphate + ATP. It participates in amino-acid biosynthesis; L-histidine biosynthesis; L-histidine from 5-phospho-alpha-D-ribose 1-diphosphate: step 1/9. Functionally, catalyzes the condensation of ATP and 5-phosphoribose 1-diphosphate to form N'-(5'-phosphoribosyl)-ATP (PR-ATP). Has a crucial role in the pathway because the rate of histidine biosynthesis seems to be controlled primarily by regulation of HisG enzymatic activity. The chain is ATP phosphoribosyltransferase from Albidiferax ferrireducens (strain ATCC BAA-621 / DSM 15236 / T118) (Rhodoferax ferrireducens).